Here is a 334-residue protein sequence, read N- to C-terminus: Fructose-1,6-bisphosphatase class 1 (334 aa).

Mg(2+) contacts are provided by glutamate 87, aspartate 106, leucine 108, and aspartate 109. Substrate-binding positions include 109–112, asparagine 208, and lysine 274; that span reads DGSS. Residue glutamate 280 participates in Mg(2+) binding.

It belongs to the FBPase class 1 family. In terms of assembly, homotetramer. Mg(2+) serves as cofactor.

It localises to the cytoplasm. It carries out the reaction beta-D-fructose 1,6-bisphosphate + H2O = beta-D-fructose 6-phosphate + phosphate. It participates in carbohydrate biosynthesis; gluconeogenesis. The chain is Fructose-1,6-bisphosphatase class 1 from Psychrobacter sp. (strain PRwf-1).